Consider the following 127-residue polypeptide: Large ribosomal subunit protein bL21c (127 aa).

It belongs to the bacterial ribosomal protein bL21 family. As to quaternary structure, part of the 50S ribosomal subunit.

Its subcellular location is the plastid. It is found in the chloroplast. In terms of biological role, this protein binds to 23S rRNA. The chain is Large ribosomal subunit protein bL21c from Adiantum capillus-veneris (Maidenhair fern).